We begin with the raw amino-acid sequence, 405 residues long: Cytoplasmic polyadenylated homeobox-like protein (405 aa).

2 disordered regions span residues 1–33 (MNLD…KHRH) and 340–363 (PWDL…QNNG). The span at 13–23 (EEDHHNEERQT) shows a compositional bias: basic and acidic residues. Residues 24–33 (KNKRKTKHRH) are compositionally biased toward basic residues. A DNA-binding region (homeobox) is located at residues 28–87 (KTKHRHKFSEELLQELKEIFGENCYPDYTTRKTLAIKFDCPVNVIDNWFQNKRARLPPAE). The segment covering 346–360 (QWSSAQSQLQSQLPQ) has biased composition (low complexity).

It is found in the nucleus. Transcription factor that acts as activator. This chain is Cytoplasmic polyadenylated homeobox-like protein, found in Homo sapiens (Human).